A 363-amino-acid polypeptide reads, in one-letter code: Protein-arginine kinase (363 aa).

The 231-residue stretch at 24–254 (IVLSSRIRLA…AQLIEQERSA (231 aa)) folds into the Phosphagen kinase C-terminal domain. ATP-binding positions include 27-31 (SSRIR), H92, R125, 176-180 (RASVM), and 207-212 (RGIYGE). An RDXXRA motif of the pArg binding pocket involved in allosteric regulation motif is present at residues 337–342 (RDIRRA).

Belongs to the ATP:guanido phosphotransferase family.

It carries out the reaction L-arginyl-[protein] + ATP = N(omega)-phospho-L-arginyl-[protein] + ADP + H(+). Appears to be allosterically activated by the binding of pArg-containing polypeptides to the pArg-binding pocket localized in the C-terminal domain of McsB. In terms of biological role, catalyzes the specific phosphorylation of arginine residues in a large number of proteins. Is part of the bacterial stress response system. Protein arginine phosphorylation has a physiologically important role and is involved in the regulation of many critical cellular processes, such as protein homeostasis, motility, competence, and stringent and stress responses, by regulating gene expression and protein activity. This chain is Protein-arginine kinase, found in Bacillus licheniformis (strain ATCC 14580 / DSM 13 / JCM 2505 / CCUG 7422 / NBRC 12200 / NCIMB 9375 / NCTC 10341 / NRRL NRS-1264 / Gibson 46).